A 223-amino-acid chain; its full sequence is Ribonuclease 3 (223 aa).

An RNase III domain is found at 3 to 125 (LEKLQKKLGH…LIAAIYLDAG (123 aa)). E38 serves as a coordination point for Mg(2+). Residue D42 is part of the active site. Positions 111 and 114 each coordinate Mg(2+). The active site involves E114. Positions 152-222 (DPKTRLQEFL…AQQAIEKLKI (71 aa)) constitute a DRBM domain.

It belongs to the ribonuclease III family. Homodimer. The cofactor is Mg(2+).

It localises to the cytoplasm. It carries out the reaction Endonucleolytic cleavage to 5'-phosphomonoester.. Its function is as follows. Digests double-stranded RNA. Involved in the processing of primary rRNA transcript to yield the immediate precursors to the large and small rRNAs (23S and 16S). Processes some mRNAs, and tRNAs when they are encoded in the rRNA operon. Processes pre-crRNA and tracrRNA of type II CRISPR loci if present in the organism. This chain is Ribonuclease 3, found in Histophilus somni (strain 2336) (Haemophilus somnus).